The chain runs to 935 residues: Isoleucine--tRNA ligase (935 aa).

A 'HIGH' region motif is present at residues P58–H68. An L-isoleucyl-5'-AMP-binding site is contributed by E558. Residues K599–S603 carry the 'KMSKS' region motif. K602 is a binding site for ATP. Zn(2+) is bound by residues C897, C900, C917, and C920.

The protein belongs to the class-I aminoacyl-tRNA synthetase family. IleS type 1 subfamily. In terms of assembly, monomer. Zn(2+) serves as cofactor.

It is found in the cytoplasm. The catalysed reaction is tRNA(Ile) + L-isoleucine + ATP = L-isoleucyl-tRNA(Ile) + AMP + diphosphate. Its function is as follows. Catalyzes the attachment of isoleucine to tRNA(Ile). As IleRS can inadvertently accommodate and process structurally similar amino acids such as valine, to avoid such errors it has two additional distinct tRNA(Ile)-dependent editing activities. One activity is designated as 'pretransfer' editing and involves the hydrolysis of activated Val-AMP. The other activity is designated 'posttransfer' editing and involves deacylation of mischarged Val-tRNA(Ile). The chain is Isoleucine--tRNA ligase from Francisella tularensis subsp. novicida (strain U112).